The primary structure comprises 201 residues: Imidazoleglycerol-phosphate dehydratase (201 aa).

It belongs to the imidazoleglycerol-phosphate dehydratase family.

The protein localises to the cytoplasm. The enzyme catalyses D-erythro-1-(imidazol-4-yl)glycerol 3-phosphate = 3-(imidazol-4-yl)-2-oxopropyl phosphate + H2O. It functions in the pathway amino-acid biosynthesis; L-histidine biosynthesis; L-histidine from 5-phospho-alpha-D-ribose 1-diphosphate: step 6/9. In Synechococcus sp. (strain CC9311), this protein is Imidazoleglycerol-phosphate dehydratase.